The sequence spans 698 residues: DNA-directed RNA polymerase subunit beta' (698 aa).

Residues C69, C71, C89, and C92 each coordinate Zn(2+). 3 residues coordinate Mg(2+): D509, D511, and D513.

This sequence belongs to the RNA polymerase beta' chain family. RpoC1 subfamily. In plastids the minimal PEP RNA polymerase catalytic core is composed of four subunits: alpha, beta, beta', and beta''. When a (nuclear-encoded) sigma factor is associated with the core the holoenzyme is formed, which can initiate transcription. Mg(2+) is required as a cofactor. Requires Zn(2+) as cofactor.

It localises to the plastid. It is found in the chloroplast. It catalyses the reaction RNA(n) + a ribonucleoside 5'-triphosphate = RNA(n+1) + diphosphate. In terms of biological role, DNA-dependent RNA polymerase catalyzes the transcription of DNA into RNA using the four ribonucleoside triphosphates as substrates. The sequence is that of DNA-directed RNA polymerase subunit beta' from Cryptomeria japonica (Japanese cedar).